The chain runs to 96 residues: Xylulose kinase (96 aa).

Residue 71–72 (QH) coordinates substrate.

This sequence belongs to the FGGY kinase family.

It catalyses the reaction D-xylulose + ATP = D-xylulose 5-phosphate + ADP + H(+). Functionally, catalyzes the phosphorylation of D-xylulose to D-xylulose 5-phosphate. The protein is Xylulose kinase of Arthrobacter sp. (strain NRRL B3728).